Consider the following 98-residue polypeptide: Small ribosomal subunit protein bS20 (98 aa).

A compositionally biased stretch (basic residues) spans 1 to 15; sequence MAPKKTTKKGGPKKR. The interval 1–21 is disordered; sequence MAPKKTTKKGGPKKRPSAEKR.

This sequence belongs to the bacterial ribosomal protein bS20 family.

Its function is as follows. Binds directly to 16S ribosomal RNA. The polypeptide is Small ribosomal subunit protein bS20 (Chlamydia abortus (strain DSM 27085 / S26/3) (Chlamydophila abortus)).